Here is an 880-residue protein sequence, read N- to C-terminus: DNA mismatch repair protein MutS (880 aa).

635-642 (GPNMGGKS) is an ATP binding site.

This sequence belongs to the DNA mismatch repair MutS family.

In terms of biological role, this protein is involved in the repair of mismatches in DNA. It is possible that it carries out the mismatch recognition step. This protein has a weak ATPase activity. This Nitrosomonas eutropha (strain DSM 101675 / C91 / Nm57) protein is DNA mismatch repair protein MutS.